We begin with the raw amino-acid sequence, 152 residues long: Coiled-coil domain-containing protein 182 (152 aa).

The stretch at 46–109 forms a coiled coil; it reads ADLEILQQKV…RLREEEDRGI (64 aa).

This Mus musculus (Mouse) protein is Coiled-coil domain-containing protein 182 (Ccdc182).